The primary structure comprises 552 residues: Carboxypeptidase Y homolog A (552 aa).

Positions 1-18 (MRIATSTLLVGAASAAFA) are cleaved as a signal peptide. Residues 19–133 (PQDGTQRVLN…KLDNYNLRAR (115 aa)) constitute a propeptide that is removed on maturation. Disulfide bonds link Cys-187/Cys-427, Cys-321/Cys-335, Cys-345/Cys-368, Cys-352/Cys-361, and Cys-390/Cys-397. The N-linked (GlcNAc...) asparagine glycan is linked to Asn-218. Ser-274 is an active-site residue. The active site involves Asp-466. Asn-516 is a glycosylation site (N-linked (GlcNAc...) asparagine). His-527 is an active-site residue.

It belongs to the peptidase S10 family.

The protein resides in the vacuole. The catalysed reaction is Release of a C-terminal amino acid with broad specificity.. Functionally, vacuolar carboxypeptidase involved in degradation of small peptides. Digests preferentially peptides containing an aliphatic or hydrophobic residue in P1' position, as well as methionine, leucine or phenylalanine in P1 position of ester substrate. The sequence is that of Carboxypeptidase Y homolog A (CPYA) from Pyricularia oryzae (strain 70-15 / ATCC MYA-4617 / FGSC 8958) (Rice blast fungus).